The sequence spans 561 residues: Cytosolic purine 5'-nucleotidase (561 aa).

The active-site Nucleophile is Asp52. GMP is bound by residues Asp52 and Asp54. IMP-binding residues include Asp52 and Asp54. Residues Asp52 and Asp54 each coordinate Mg(2+). Asp54 functions as the Proton donor in the catalytic mechanism. Arg144 contributes to the (2R)-2,3-bisphosphoglycerate binding site. Arg144 and Asn154 together coordinate ATP. DATP contacts are provided by Arg144 and Asn154. Position 154 (Asn154) interacts with adenosine. Residue Asn154 coordinates P(1),P(4)-bis(5'-adenosyl) tetraphosphate. GMP is bound by residues Arg202, Asp206, Lys215, Thr249, and Asn250. 7 residues coordinate IMP: Arg202, Asp206, Lys215, Thr249, Asn250, Ser251, and Lys292. Lys292 lines the GMP pocket. Position 351 (Asp351) interacts with Mg(2+). Lys362 is a (2R)-2,3-bisphosphoglycerate binding site. Lys362 contributes to the P(1),P(4)-bis(5'-adenosyl) tetraphosphate binding site. A Phosphoserine modification is found at Ser418. Residues Met436 and Gln453 each contribute to the adenosine site. Residues Gln453 and Arg456 each coordinate ATP. DATP-binding residues include Gln453 and Arg456. Gln453 provides a ligand contact to P(1),P(4)-bis(5'-adenosyl) tetraphosphate. Tyr457 serves as a coordination point for (2R)-2,3-bisphosphoglycerate. Residue Tyr457 coordinates P(1),P(4)-bis(5'-adenosyl) tetraphosphate. Ser502, Ser511, and Ser527 each carry phosphoserine. The tract at residues Pro538–Glu561 is disordered. Positions His548–Glu561 are required for tetramer assembly. Residues Glu550–Glu561 are compositionally biased toward acidic residues.

It belongs to the 5'(3')-deoxyribonucleotidase family. As to quaternary structure, homotetramer. Requires Mg(2+) as cofactor. In terms of tissue distribution, widely expressed.

The protein resides in the cytoplasm. It is found in the cytosol. The catalysed reaction is a ribonucleoside 5'-phosphate + H2O = a ribonucleoside + phosphate. It carries out the reaction a 2'-deoxyribonucleoside + a ribonucleoside 5'-phosphate = a ribonucleoside + a 2'-deoxyribonucleoside 5'-phosphate. The enzyme catalyses IMP + H2O = inosine + phosphate. It catalyses the reaction GMP + H2O = guanosine + phosphate. The catalysed reaction is dIMP + H2O = 2'-deoxyinosine + phosphate. It carries out the reaction dGMP + H2O = 2'-deoxyguanosine + phosphate. The enzyme catalyses XMP + H2O = xanthosine + phosphate. It catalyses the reaction inosine + GMP = guanosine + IMP. The catalysed reaction is dGMP + inosine = 2'-deoxyguanosine + IMP. It carries out the reaction dIMP + inosine = 2'-deoxyinosine + IMP. The enzyme catalyses inosine + UMP = uridine + IMP. It catalyses the reaction inosine + CMP = cytidine + IMP. The catalysed reaction is inosine + AMP = IMP + adenosine. Allosterically activated by various compounds including ATP, 2,3-BPG/2,3-Bisphosphoglyceric acid and Ap4A/P1,P4-bis(5'-adenosyl) tetraphosphate. Binding of an allosteric activator is a prerequisiste to magnesium and substrate binding. Inhibited by inorganic phosphate. Broad specificity cytosolic 5'-nucleotidase that catalyzes the dephosphorylation of 6-hydroxypurine nucleoside 5'-monophosphates. In addition, possesses a phosphotransferase activity by which it can transfer a phosphate from a donor nucleoside monophosphate to an acceptor nucleoside, preferably inosine, deoxyinosine and guanosine. Has the highest activities for IMP and GMP followed by dIMP, dGMP and XMP. Could also catalyze the transfer of phosphates from pyrimidine monophosphates but with lower efficiency. Through these activities regulates the purine nucleoside/nucleotide pools within the cell. The chain is Cytosolic purine 5'-nucleotidase from Homo sapiens (Human).